We begin with the raw amino-acid sequence, 363 residues long: Endopolygalacturonase 1 (363 aa).

A signal peptide spans 1 to 17 (MVSYLFVLGALASVAIA). Residues 18 to 26 (SPVPELKAR) constitute a propeptide that is removed on maturation. C29 and C44 are joined by a disulfide. 4 PbH1 repeats span residues 188-209 (STGV…AVNS), 210-230 (GTNI…SIGS), 239-260 (VKSV…RIKT), and 268-290 (VSDI…VIEQ). The active-site Proton donor is the D202. A disulfide bridge connects residues C204 and C220. The N-linked (GlcNAc...) asparagine glycan is linked to N212. H224 is a catalytic residue. Cystine bridges form between C330-C333 and C352-C363.

The protein belongs to the glycosyl hydrolase 28 family.

Its subcellular location is the secreted. The catalysed reaction is (1,4-alpha-D-galacturonosyl)n+m + H2O = (1,4-alpha-D-galacturonosyl)n + (1,4-alpha-D-galacturonosyl)m.. Involved in maceration and soft-rotting of plant tissue. Hydrolyzes the 1,4-alpha glycosidic bonds of de-esterified pectate in the smooth region of the plant cell wall. The polypeptide is Endopolygalacturonase 1 (PG1) (Colletotrichum lindemuthianum (Bean anthracnose fungus)).